An 84-amino-acid polypeptide reads, in one-letter code: uncharacterized protein (84 aa).

This is an uncharacterized protein from Acidianus convivator (ATV).